A 124-amino-acid polypeptide reads, in one-letter code: Small ribosomal subunit protein uS12 (124 aa).

A disordered region spans residues 1–32 (MPTIQQLVRKGRQDKVEKTKTPALKGSPQRRG). Basic and acidic residues predominate over residues 11–20 (GRQDKVEKTK). Asp89 carries the 3-methylthioaspartic acid modification.

It belongs to the universal ribosomal protein uS12 family. As to quaternary structure, part of the 30S ribosomal subunit. Contacts proteins S8 and S17. May interact with IF1 in the 30S initiation complex.

In terms of biological role, with S4 and S5 plays an important role in translational accuracy. Functionally, interacts with and stabilizes bases of the 16S rRNA that are involved in tRNA selection in the A site and with the mRNA backbone. Located at the interface of the 30S and 50S subunits, it traverses the body of the 30S subunit contacting proteins on the other side and probably holding the rRNA structure together. The combined cluster of proteins S8, S12 and S17 appears to hold together the shoulder and platform of the 30S subunit. This Frankia alni (strain DSM 45986 / CECT 9034 / ACN14a) protein is Small ribosomal subunit protein uS12.